A 158-amino-acid polypeptide reads, in one-letter code: N-alpha-acetyltransferase RimI (158 aa).

Residues 8 to 155 (VTIGALTRAD…DAYTMRRDSG (148 aa)) form the N-acetyltransferase domain.

It belongs to the acetyltransferase family. RimI subfamily. Monomer. Interacts with TsaD. Interacts with GroS/GroES.

It carries out the reaction N-terminal L-methionyl-L-alanyl-[protein] + acetyl-CoA = N-terminal N(alpha)-acetyl-L-methionyl-L-alanyl-[protein] + CoA + H(+). The catalysed reaction is N-terminal L-methionyl-L-seryl-[protein] + acetyl-CoA = N-terminal N(alpha)-acetyl-L-methionyl-L-seryl-[protein] + CoA + H(+). It catalyses the reaction N-terminal L-methionyl-L-valyl-[protein] + acetyl-CoA = N-terminal N(alpha)-acetyl-L-methionyl-L-valyl-[protein] + CoA + H(+). The enzyme catalyses N-terminal L-methionyl-L-threonyl-[protein] + acetyl-CoA = N-terminal N(alpha)-acetyl-L-methionyl-L-threonyl-[protein] + CoA + H(+). It carries out the reaction N-terminal L-methionyl-L-lysyl-[protein] + acetyl-CoA = N-terminal N(alpha)-acetyl-L-methionyl-L-lysyl-[protein] + CoA + H(+). The catalysed reaction is N-terminal L-methionyl-L-leucyl-[protein] + acetyl-CoA = N-terminal N(alpha)-acetyl-L-methionyl-L-leucyl-[protein] + CoA + H(+). It catalyses the reaction N-terminal L-methionyl-L-phenylalanyl-[protein] + acetyl-CoA = N-terminal N(alpha)-acetyl-L-methionyl-L-phenylalanyl-[protein] + CoA + H(+). The enzyme catalyses N-terminal L-methionyl-L-tyrosyl-[protein] + acetyl-CoA = N-terminal N(alpha)-acetyl-L-methionyl-L-tyrosyl-[protein] + CoA + H(+). It carries out the reaction N-terminal glycyl-[protein] + acetyl-CoA = N-terminal N(alpha)-acetylglycyl-[protein] + CoA + H(+). The catalysed reaction is N-terminal L-alanyl-[protein] + acetyl-CoA = N-terminal N(alpha)-acetyl-L-alanyl-[protein] + CoA + H(+). It catalyses the reaction N-terminal L-seryl-[protein] + acetyl-CoA = N-terminal N(alpha)-acetyl-L-seryl-[protein] + CoA + H(+). The enzyme catalyses N-terminal L-valyl-[protein] + acetyl-CoA = N-terminal N(alpha)-acetyl-L-valyl-[protein] + CoA + H(+). It carries out the reaction N-terminal L-cysteinyl-[protein] + acetyl-CoA = N-terminal N(alpha)-acetyl-L-cysteinyl-[protein] + CoA + H(+). The catalysed reaction is N-terminal L-threonyl-[protein] + acetyl-CoA = N-terminal N(alpha)-acetyl-L-threonyl-[protein] + CoA + H(+). In terms of biological role, N-alpha-acetyltransferase that specifically mediates the acetylation of N-terminal residues. Able to mediate acetylation of a wide variety of N-terminal residues, with preference for hydrophobic N-termini. Acetylates GroS/GroES and GroEL1. Able to acetylate the ribosomal protein bS18, but it is unclear whether it acetylates its N-terminal alanine residue. The protein is N-alpha-acetyltransferase RimI of Mycobacterium tuberculosis (strain ATCC 25618 / H37Rv).